Consider the following 712-residue polypeptide: Ribosomal RNA large subunit methyltransferase K/L (712 aa).

Residues G46–L157 enclose the THUMP domain.

Belongs to the methyltransferase superfamily. RlmKL family.

The protein resides in the cytoplasm. It carries out the reaction guanosine(2445) in 23S rRNA + S-adenosyl-L-methionine = N(2)-methylguanosine(2445) in 23S rRNA + S-adenosyl-L-homocysteine + H(+). The catalysed reaction is guanosine(2069) in 23S rRNA + S-adenosyl-L-methionine = N(2)-methylguanosine(2069) in 23S rRNA + S-adenosyl-L-homocysteine + H(+). Functionally, specifically methylates the guanine in position 2445 (m2G2445) and the guanine in position 2069 (m7G2069) of 23S rRNA. This chain is Ribosomal RNA large subunit methyltransferase K/L, found in Haemophilus ducreyi (strain 35000HP / ATCC 700724).